We begin with the raw amino-acid sequence, 557 residues long: Glutamine--tRNA ligase (557 aa).

The 'HIGH' region signature appears at Pro-42–His-52. ATP contacts are provided by residues Glu-43 to Asn-45 and His-49 to Ser-55. L-glutamine contacts are provided by Asp-75 and Tyr-220. ATP is bound by residues Thr-239 and Arg-270–Leu-271. The 'KMSKS' region signature appears at Leu-277–Arg-281.

The protein belongs to the class-I aminoacyl-tRNA synthetase family. Monomer.

It is found in the cytoplasm. The catalysed reaction is tRNA(Gln) + L-glutamine + ATP = L-glutaminyl-tRNA(Gln) + AMP + diphosphate. The protein is Glutamine--tRNA ligase of Haemophilus influenzae (strain ATCC 51907 / DSM 11121 / KW20 / Rd).